The primary structure comprises 76 residues: Conotoxin MaIr332 (76 aa).

An N-terminal signal peptide occupies residues 1 to 21; the sequence is MKLTCVIVAVLFLTAWTFVTA. The propeptide occupies 22 to 48; sequence DDSGNGLENLFSKAHHEMKNPKDSKLN. Cystine bridges form between C51-C66, C58-C70, and C65-C75.

This sequence belongs to the conotoxin O1 superfamily. In terms of tissue distribution, expressed by the venom duct.

The protein resides in the secreted. The polypeptide is Conotoxin MaIr332 (Conus marmoreus (Marble cone)).